The sequence spans 363 residues: Lipase (363 aa).

The first 24 residues, 1 to 24, serve as a signal peptide directing secretion; it reads MVLKQRANYLGFLIVFFTAFLVEA. A propeptide spanning residues 25–94 is cleaved from the precursor; that stretch reads VPIKRQSNST…SYPDSVVQAM (70 aa). The tract at residues 33-69 is disordered; the sequence is STVDSLPPLIPSRTSAPSSSPSTTDPEAPAMSRNGPL. Over residues 43-62 the composition is skewed to low complexity; sequence PSRTSAPSSSPSTTDPEAPA. 3 cysteine pairs are disulfide-bonded: cysteine 123–cysteine 362, cysteine 134–cysteine 137, and cysteine 329–cysteine 338. Serine 238 serves as the catalytic Nucleophile. Aspartate 297 acts as the Charge relay system in catalysis. Aspartate 350 serves as a coordination point for Ca(2+). The active-site Charge relay system is histidine 351.

It belongs to the AB hydrolase superfamily. Lipase family.

The catalysed reaction is a triacylglycerol + H2O = a diacylglycerol + a fatty acid + H(+). This chain is Lipase, found in Rhizomucor miehei.